The sequence spans 353 residues: Photosystem II protein D1 (353 aa).

The residue at position 2 (Thr-2) is an N-acetylthreonine. Thr-2 carries the post-translational modification Phosphothreonine. Transmembrane regions (helical) follow at residues 29 to 46, 118 to 133, and 142 to 156; these read YIGW…TATS, HFLL…EWEL, and WIAV…AATA. His-118 serves as a coordination point for chlorophyll a. Residue Tyr-126 coordinates pheophytin a. Positions 170 and 189 each coordinate [CaMn4O5] cluster. The chain crosses the membrane as a helical span at residues 197 to 218; sequence FHMLGVAGVFGGSLFSAMHGSL. His-198 contributes to the chlorophyll a binding site. A quinone contacts are provided by residues His-215 and 264-265; that span reads SF. His-215 serves as a coordination point for Fe cation. His-272 serves as a coordination point for Fe cation. The chain crosses the membrane as a helical span at residues 274-288; it reads FLAAWPVVGIWFTAL. The [CaMn4O5] cluster site is built by His-332, Glu-333, Asp-342, and Ala-344. Residues 345–353 constitute a propeptide that is removed on maturation; that stretch reads AVEAPSING.

This sequence belongs to the reaction center PufL/M/PsbA/D family. PSII is composed of 1 copy each of membrane proteins PsbA, PsbB, PsbC, PsbD, PsbE, PsbF, PsbH, PsbI, PsbJ, PsbK, PsbL, PsbM, PsbT, PsbX, PsbY, PsbZ, Psb30/Ycf12, at least 3 peripheral proteins of the oxygen-evolving complex and a large number of cofactors. It forms dimeric complexes. The cofactor is The D1/D2 heterodimer binds P680, chlorophylls that are the primary electron donor of PSII, and subsequent electron acceptors. It shares a non-heme iron and each subunit binds pheophytin, quinone, additional chlorophylls, carotenoids and lipids. D1 provides most of the ligands for the Mn4-Ca-O5 cluster of the oxygen-evolving complex (OEC). There is also a Cl(-1) ion associated with D1 and D2, which is required for oxygen evolution. The PSII complex binds additional chlorophylls, carotenoids and specific lipids.. Post-translationally, tyr-161 forms a radical intermediate that is referred to as redox-active TyrZ, YZ or Y-Z. C-terminally processed by CTPA; processing is essential to allow assembly of the oxygen-evolving complex and thus photosynthetic growth.

The protein resides in the plastid. The protein localises to the chloroplast thylakoid membrane. The catalysed reaction is 2 a plastoquinone + 4 hnu + 2 H2O = 2 a plastoquinol + O2. Photosystem II (PSII) is a light-driven water:plastoquinone oxidoreductase that uses light energy to abstract electrons from H(2)O, generating O(2) and a proton gradient subsequently used for ATP formation. It consists of a core antenna complex that captures photons, and an electron transfer chain that converts photonic excitation into a charge separation. The D1/D2 (PsbA/PsbD) reaction center heterodimer binds P680, the primary electron donor of PSII as well as several subsequent electron acceptors. The chain is Photosystem II protein D1 from Medicago sativa (Alfalfa).